The primary structure comprises 429 residues: UDP-N-acetylglucosamine 1-carboxyvinyltransferase (429 aa).

A phosphoenolpyruvate-binding site is contributed by 22 to 23 (KN). Position 96 (R96) interacts with UDP-N-acetyl-alpha-D-glucosamine. Catalysis depends on C120, which acts as the Proton donor. The residue at position 120 (C120) is a 2-(S-cysteinyl)pyruvic acid O-phosphothioketal. Residues 125 to 129 (RPVDL), D310, and I332 contribute to the UDP-N-acetyl-alpha-D-glucosamine site.

Belongs to the EPSP synthase family. MurA subfamily.

It localises to the cytoplasm. It catalyses the reaction phosphoenolpyruvate + UDP-N-acetyl-alpha-D-glucosamine = UDP-N-acetyl-3-O-(1-carboxyvinyl)-alpha-D-glucosamine + phosphate. It functions in the pathway cell wall biogenesis; peptidoglycan biosynthesis. Cell wall formation. Adds enolpyruvyl to UDP-N-acetylglucosamine. The chain is UDP-N-acetylglucosamine 1-carboxyvinyltransferase from Caulobacter vibrioides (strain ATCC 19089 / CIP 103742 / CB 15) (Caulobacter crescentus).